Consider the following 104-residue polypeptide: L-rhamnose mutarotase (104 aa).

Tyr-18 lines the substrate pocket. The active-site Proton donor is His-22. Residues Tyr-41 and 76–77 contribute to the substrate site; that span reads WW.

Belongs to the rhamnose mutarotase family. As to quaternary structure, homodimer.

It is found in the cytoplasm. The enzyme catalyses alpha-L-rhamnose = beta-L-rhamnose. It functions in the pathway carbohydrate metabolism; L-rhamnose metabolism. Its function is as follows. Involved in the anomeric conversion of L-rhamnose. The sequence is that of L-rhamnose mutarotase from Shigella flexneri serotype 5b (strain 8401).